A 154-amino-acid polypeptide reads, in one-letter code: 6,7-dimethyl-8-ribityllumazine synthase (154 aa).

5-amino-6-(D-ribitylamino)uracil-binding positions include phenylalanine 22, 56–58 (AFE), and 80–82 (TVI). 85–86 (AT) provides a ligand contact to (2S)-2-hydroxy-3-oxobutyl phosphate. Catalysis depends on histidine 88, which acts as the Proton donor. Phenylalanine 113 is a binding site for 5-amino-6-(D-ribitylamino)uracil. Arginine 127 serves as a coordination point for (2S)-2-hydroxy-3-oxobutyl phosphate.

Belongs to the DMRL synthase family. As to quaternary structure, forms an icosahedral capsid composed of 60 subunits, arranged as a dodecamer of pentamers.

The enzyme catalyses (2S)-2-hydroxy-3-oxobutyl phosphate + 5-amino-6-(D-ribitylamino)uracil = 6,7-dimethyl-8-(1-D-ribityl)lumazine + phosphate + 2 H2O + H(+). It participates in cofactor biosynthesis; riboflavin biosynthesis; riboflavin from 2-hydroxy-3-oxobutyl phosphate and 5-amino-6-(D-ribitylamino)uracil: step 1/2. Its function is as follows. Catalyzes the formation of 6,7-dimethyl-8-ribityllumazine by condensation of 5-amino-6-(D-ribitylamino)uracil with 3,4-dihydroxy-2-butanone 4-phosphate. This is the penultimate step in the biosynthesis of riboflavin. This chain is 6,7-dimethyl-8-ribityllumazine synthase, found in Bacillus pumilus (strain SAFR-032).